The sequence spans 214 residues: A-type ATP synthase subunit D (214 aa).

The protein belongs to the V-ATPase D subunit family. As to quaternary structure, has multiple subunits with at least A(3), B(3), C, D, E, F, H, I and proteolipid K(x).

It localises to the cell membrane. Functionally, component of the A-type ATP synthase that produces ATP from ADP in the presence of a proton gradient across the membrane. This Pyrococcus furiosus (strain ATCC 43587 / DSM 3638 / JCM 8422 / Vc1) protein is A-type ATP synthase subunit D.